Consider the following 170-residue polypeptide: MATQVKKELVAELVEKIKKAQSVVFVDYQGIKVNEETLLRKQMRENGAEYLVAKNRLFKIALKESGVEDSFDEILEGSTAFAFGYNDPVAPAKAVFDLAKAKAKAKLDVFKIKGGYLTGKKVSVKEVEELAKLPSREQLLSMLLNSMLGPIRKLAYATVAIADKKEGSAE.

It belongs to the universal ribosomal protein uL10 family. As to quaternary structure, part of the ribosomal stalk of the 50S ribosomal subunit. The N-terminus interacts with L11 and the large rRNA to form the base of the stalk. The C-terminus forms an elongated spine to which L12 dimers bind in a sequential fashion forming a multimeric L10(L12)X complex.

Functionally, forms part of the ribosomal stalk, playing a central role in the interaction of the ribosome with GTP-bound translation factors. The sequence is that of Large ribosomal subunit protein uL10 from Fusobacterium nucleatum subsp. nucleatum (strain ATCC 25586 / DSM 15643 / BCRC 10681 / CIP 101130 / JCM 8532 / KCTC 2640 / LMG 13131 / VPI 4355).